We begin with the raw amino-acid sequence, 461 residues long: Xyloglucan 6-xylosyltransferase 2 (461 aa).

Residues 1-20 (MIERCLGAYRCRRIQRALRQ) lie on the Cytoplasmic side of the membrane. A helical; Signal-anchor for type II membrane protein transmembrane segment spans residues 21–40 (LKVTILCLLLTVVVLRSTIG). The Lumenal portion of the chain corresponds to 41–461 (AGKFGTPEQD…KAVKVQTNQV (421 aa)). The tract at residues 74–95 (QTGGDSSSGDGGGNSGGSNNYE) is disordered. An N-linked (GlcNAc...) asparagine glycan is attached at asparagine 432.

The protein belongs to the glycosyltransferase 34 family. Homodimer. Interacts with XXT1 and XXT5. Interacts with FUT1 and XLT2.

It localises to the golgi apparatus membrane. It carries out the reaction Transfers an alpha-D-xylosyl residue from UDP-D-xylose to a glucose residue in xyloglucan, forming an alpha-(1-&gt;6)-D-xylosyl-D-glucose linkage.. Its function is as follows. Xylosyltransferase specific to UDP-D-xylose that accepts both cellopentaose and cellohexaose as substrates, with a better use of cellohexaose, to produce xyloglucan. Adds preferentially the first xylosyl residue to the fourth glucosyl residue from the reducing end of both acceptors. Transfer one xylose mainly to the second glucose residue from the non-reducing end. The acceptor should have a minimum of four glucose residues. Associates with other xyloglucan-synthesizing enzymes to form multiprotein complexes for xyloglucan synthesis in the Golgi. This chain is Xyloglucan 6-xylosyltransferase 2 (XXT2), found in Arabidopsis thaliana (Mouse-ear cress).